The following is a 389-amino-acid chain: Phosphoglycerate kinase (389 aa).

Residues 21–23 (DLN), R36, 59–62 (HLGR), R112, and R145 each bind substrate. ATP contacts are provided by residues K196, E313, and 342-345 (GGDT).

This sequence belongs to the phosphoglycerate kinase family. As to quaternary structure, monomer.

The protein resides in the cytoplasm. It catalyses the reaction (2R)-3-phosphoglycerate + ATP = (2R)-3-phospho-glyceroyl phosphate + ADP. Its pathway is carbohydrate degradation; glycolysis; pyruvate from D-glyceraldehyde 3-phosphate: step 2/5. This is Phosphoglycerate kinase from Mannheimia succiniciproducens (strain KCTC 0769BP / MBEL55E).